Consider the following 280-residue polypeptide: Serine protease 33 (280 aa).

The signal sequence occupies residues 1–22 (MRGVSCLQVLLLLVLGAAGTQG). Residues 37–279 (IVGGRDGRDG…YSPWIQARVS (243 aa)) form the Peptidase S1 domain. Residues cysteine 62 and cysteine 78 are joined by a disulfide bond. Active-site charge relay system residues include histidine 77 and aspartate 126. Disulfide bonds link cysteine 160–cysteine 237, cysteine 193–cysteine 216, and cysteine 227–cysteine 255. The active-site Charge relay system is serine 231.

Belongs to the peptidase S1 family. As to expression, predominantly expressed in macrophages. Present in the spleen, small and large intestine, lung and brain (at protein level). Highly expressed in peripheral leukocytes, ovary, retina, spleen and stomach. Moderately expressed in thymus, uterus and platelets, as well as some brain tissues, such as thalamus and fetal brain.

It is found in the secreted. Its function is as follows. Serine protease that has amidolytic activity, cleaving its substrates before Arg residues. In Homo sapiens (Human), this protein is Serine protease 33 (PRSS33).